A 74-amino-acid chain; its full sequence is Cold shock-like protein CspD (74 aa).

One can recognise a CSD domain in the interval Gly4 to Ile64.

As to quaternary structure, homodimer.

It localises to the cytoplasm. Its function is as follows. Inhibits DNA replication at both initiation and elongation steps, most probably by binding to the opened, single-stranded regions at replication forks. Plays a regulatory role in chromosomal replication in nutrient-depleted cells. This Escherichia coli O157:H7 protein is Cold shock-like protein CspD (cspD).